A 212-amino-acid chain; its full sequence is Thymidylate kinase (212 aa).

Residue 11-18 (GLEGAGKS) coordinates ATP.

Belongs to the thymidylate kinase family.

It catalyses the reaction dTMP + ATP = dTDP + ADP. Its function is as follows. Phosphorylation of dTMP to form dTDP in both de novo and salvage pathways of dTTP synthesis. The chain is Thymidylate kinase from Vibrio vulnificus (strain CMCP6).